A 458-amino-acid chain; its full sequence is MALWGGRFTQAADQRFKQFNDSLRFDYRLAEQDIVGSVAWSKALVTVGVLTADEQRQLEEALNVLLEEVRANPQQILQSDAEDIHSWVEGKLIDKVGQLGKKLHTGRSRNDQVATDLKLWCKETVRELLTANRQLQSALVETAQANQDAVMPGYTHLQRAQPVTFAHWCLAYVEMLARDESRLQDTLKRLDVSPLGCGALAGTAYEIDREQLAGWLGFTSATRNSLDSVSDRDHVLELLSDAAIGMVHLSRFAEDLIFFNSGEAGFVELSDRVTSGSSLMPQKKNPDALELIRGKCGRVQGALTGMMMTLKGLPLAYNKDMQEDKEGLFDALDTWLDCLHMAALVLDGIQVKRLRCQDAAQQGYANATELADYLVAKGVPFREAHHIVGEAVVEAIRQGKPLEALPLADLQKFSRVIGDDVYPILSLQSCLDKRAAKGGVSPQQVAQAIDDARARLAL.

Belongs to the lyase 1 family. Argininosuccinate lyase subfamily.

The protein resides in the cytoplasm. It catalyses the reaction 2-(N(omega)-L-arginino)succinate = fumarate + L-arginine. The protein operates within amino-acid biosynthesis; L-arginine biosynthesis; L-arginine from L-ornithine and carbamoyl phosphate: step 3/3. The protein is Argininosuccinate lyase of Salmonella schwarzengrund (strain CVM19633).